The primary structure comprises 490 residues: Probable cytosol aminopeptidase (490 aa).

2 residues coordinate Mn(2+): Lys-255 and Asp-260. The active site involves Lys-267. Mn(2+)-binding residues include Asp-278, Asp-337, and Glu-339. Residue Arg-341 is part of the active site.

It belongs to the peptidase M17 family. The cofactor is Mn(2+).

It is found in the cytoplasm. It catalyses the reaction Release of an N-terminal amino acid, Xaa-|-Yaa-, in which Xaa is preferably Leu, but may be other amino acids including Pro although not Arg or Lys, and Yaa may be Pro. Amino acid amides and methyl esters are also readily hydrolyzed, but rates on arylamides are exceedingly low.. The enzyme catalyses Release of an N-terminal amino acid, preferentially leucine, but not glutamic or aspartic acids.. Its function is as follows. Presumably involved in the processing and regular turnover of intracellular proteins. Catalyzes the removal of unsubstituted N-terminal amino acids from various peptides. The polypeptide is Probable cytosol aminopeptidase (Gluconobacter oxydans (strain 621H) (Gluconobacter suboxydans)).